Consider the following 587-residue polypeptide: MATGFSFGSGTLGSTTVAPGGTGAGSGFSFGTVASSTPSVGLNFGSLGSSVTPASTSASAGGFGTGLFGSKPATGFTLGGTSAGTAATTSASTTGFSLGFSKPAASATPFALPVTSTSASGLTLSSALTSTPAASTGFTLNNLGATPATTTTASTGLSLGGALAGLGGSLFQSGNTATSGLGQNALSLSLGTTAPTSAASNEGLGGIDFSTSSDKKSDKTGTRPEDSKALKDENLPPVICQDVENLQKFVKEQKQVQEEISRMSSKAMLKVQEDIKALKQLLSLAASGLQRNTLNIDKLKLETAQELKNAEIALRTQKTPPGLQHENTAPADYFRILVQQFEVQLQQYRQQIEELENHLATQASNSHITPQDLSMAMQKIYQTFVALAAQLQSIHENVKVLKEQYLGYRKMFLGDAVDVFEARRTEAKKWQNAPRVTTGPTPFSTMPNAAAVAMAATLTQQQQPATGPQPSLGVSFGTPFGSGIGTGLQSSGLGSSNLGGFGTSSGFGCGTTGASTFGFGTTDKPSGSLSAGFGSSSTSGFNFSNPGITASAGLTFGVSNPASAGFGTGGQLLQLKRPPAGNKRGKR.

Tandem repeats lie at residues 7-8 (FG), 30-31 (FG), 44-45 (FG), 63-64 (FG), and 68-69 (FG). A 14 X 2 AA repeats of F-G region spans residues 7-567 (FGSGTLGSTT…VSNPASAGFG (561 aa)). The disordered stretch occupies residues 196–236 (TSAASNEGLGGIDFSTSSDKKSDKTGTRPEDSKALKDENLP). Over residues 213–234 (SDKKSDKTGTRPEDSKALKDEN) the composition is skewed to basic and acidic residues. 2 coiled-coil regions span residues 244–264 (ENLQ…SRMS) and 302–369 (ETAQ…SHIT). Phosphothreonine is present on T319. 9 tandem repeats follow at residues 476–477 (FG), 480–481 (FG), 501–502 (FG), 507–508 (FG), 517–518 (FG), 519–520 (FG), 533–534 (FG), 556–557 (FG), and 566–567 (FG). Residues 565–587 (GFGTGGQLLQLKRPPAGNKRGKR) are disordered.

It belongs to the NUP58 family. In terms of assembly, component of the p62 complex, a complex at least composed of NUP62, NUP54, and NUP58. Interacts with NUTF2. Interacts with SRP1-alpha and Importin p97 proteins when they are together, but not with SRP1-alpha protein alone. Post-translationally, O-glycosylated.

The protein localises to the nucleus. The protein resides in the nuclear pore complex. It is found in the nucleus membrane. Component of the nuclear pore complex, a complex required for the trafficking across the nuclear membrane. The chain is Nucleoporin p58/p45 from Mus musculus (Mouse).